We begin with the raw amino-acid sequence, 473 residues long: H(+)/Cl(-) exchange transporter ClcA (473 aa).

At 1 to 32 the chain is on the cytoplasmic side; sequence MKTDTSTFLAQQIVRLRRRDQIRRLMQRDKTP. A helical membrane pass occupies residues 33–69; that stretch reads LAILFMAAVVGTLTGLVGVAFEKAVSWVQNMRIGALV. The Periplasmic segment spans residues 70–76; it reads QVADHAF. Residues 77–100 form a helical membrane-spanning segment; sequence LLWPLAFILSALLAMVGYFLVRKF. The Selectivity filter part_1 motif lies at 106 to 110; sequence GSGIP. Ser107 contributes to the chloride binding site. The segment at residues 109–116 is an intramembrane region (helical); the sequence is IPEIEGAL. Residues 117–123 are Cytoplasmic-facing; that stretch reads EELRPVR. 2 helical membrane passes run 124–141 and 148–166; these read WWRV…TLGA and EGPT…LDVF. A Selectivity filter part_2 motif is present at residues 146–150; the sequence is GREGP. Residues 167–176 lie on the Cytoplasmic side of the membrane; the sequence is RMRSAEARHT. Intramembrane regions (helical) lie at residues 177–189 and 193–201; these read LLAT…LSAA and PLAGILFII. Topologically, residues 202–214 are cytoplasmic; it reads EEMRPQFRYNLIS. A helical transmembrane segment spans residues 215-232; sequence IKAVFTGVIMSSIVFRIF. Topologically, residues 233–252 are periplasmic; the sequence is NGEAPIIEVGKLSDAPVNTL. The helical transmembrane segment at 253 to 281 threads the bilayer; the sequence is WLYLILGIIFGCVGPVFNSLVLRTQDMFQ. Residues 282 to 287 lie on the Cytoplasmic side of the membrane; the sequence is RFHGGE. The helical transmembrane segment at 288 to 309 threads the bilayer; that stretch reads IKKWVLMGGAIGGLCGILGLIE. Over 310-329 the chain is Periplasmic; it reads PEAAGGGFNLIPIAAAGNFS. The next 2 membrane-spanning stretches (helical) occupy residues 330–349 and 355–376; these read VGLL…LCFS and GIFA…MAAA. Residues 355–359 carry the Selectivity filter part_3 motif; sequence GIFAP. Ile356 and Phe357 together coordinate chloride. Residues 377–386 are Periplasmic-facing; that stretch reads VLFPQYHLEA. An intramembrane region (helical) is located at residues 387 to 401; that stretch reads GTFAIAGMGALMAAS. The segment at residues 402-404 is an intramembrane region (note=Loop between two helices); that stretch reads VRA. The helical intramembrane region spans 405–416; that stretch reads PLTGIVLVLEMT. An intramembrane region (note=Loop between two helices) is located at residues 417-421; sequence DNYQL. Residues 422–438 form a helical membrane-spanning segment; sequence ILPMIITCLGATLLAQF. Over 439 to 473 the chain is Cytoplasmic; that stretch reads LGGKPLYSTILARTLAKQDAEQAAKSQNAPAGENT. Residue Tyr445 participates in chloride binding.

The protein belongs to the chloride channel (TC 2.A.49) family. ClcA subfamily. Homodimer.

The protein localises to the cell inner membrane. It carries out the reaction 2 chloride(in) + H(+)(out) = 2 chloride(out) + H(+)(in). Its function is as follows. Proton-coupled chloride transporter. Functions as antiport system and exchanges two chloride ions for 1 proton. Probably acts as an electrical shunt for an outwardly-directed proton pump that is linked to amino acid decarboxylation, as part of the extreme acid resistance (XAR) response. This is H(+)/Cl(-) exchange transporter ClcA from Salmonella gallinarum (strain 287/91 / NCTC 13346).